A 38-amino-acid polypeptide reads, in one-letter code: Photosystem II reaction center protein L (38 aa).

Residues 17 to 37 (SLYWGLLLIFVLAVLFSSYIF) form a helical membrane-spanning segment.

Belongs to the PsbL family. As to quaternary structure, PSII is composed of 1 copy each of membrane proteins PsbA, PsbB, PsbC, PsbD, PsbE, PsbF, PsbH, PsbI, PsbJ, PsbK, PsbL, PsbM, PsbT, PsbX, PsbY, PsbZ, Psb30/Ycf12, at least 3 peripheral proteins of the oxygen-evolving complex and a large number of cofactors. It forms dimeric complexes.

The protein resides in the plastid. It is found in the chloroplast thylakoid membrane. Functionally, one of the components of the core complex of photosystem II (PSII). PSII is a light-driven water:plastoquinone oxidoreductase that uses light energy to abstract electrons from H(2)O, generating O(2) and a proton gradient subsequently used for ATP formation. It consists of a core antenna complex that captures photons, and an electron transfer chain that converts photonic excitation into a charge separation. This subunit is found at the monomer-monomer interface and is required for correct PSII assembly and/or dimerization. This is Photosystem II reaction center protein L from Tupiella akineta (Green alga).